The chain runs to 614 residues: MSCLEIYNKDTMKKKEGEEETRDGTVDYYGRPSIRSNSGQWVAGIVILLNQGLATLAFFGVGVNLVLFLTRVLQQNNADAANNVSKWTGTVYIFSLVGAFLSDSYWGRYKTCAIFQVIFVIGLSSLSLSSYMFLIRPRGCGDEVTPCGSHSMMEITMFYFSIYLIALGYGGYQPNIATLGADQFDEEHPKEGYSKIAFFSYFYLALNLGSLFSNTILGYFEDEGMWALGFWASTGSAIIGLILFLVGTPRYRYFKPTGNPLSRFCQVLVAATKKSSVEAPLRGREEMYDGDSEGKNASVNTGRRIVHTDEFKFLDKAAYITARDLDDKKQDSVNPWRLCPVTQVEEVKCILRLMPIWLCTIIYSVVFTQMASLFVEQGAAMNTSVSDFKIPPASMSSFDILSVALFIFLYRRVLEPVANRFKKNGSKGITELHRMGIGLVIAVIAMIAAGIVECYRLKYADKSCTHCDGSSSLSIFWQAPQYSLIGASEVFMYVGQLEFFNAQTPDGLKSFGSALCMMSMSMGNFVSSLLVTMVVKISTEDHMPGWIPRNLNKGHLDRFYFLLAALTSIDLVVYIACAKWYKPIQLEGKDEMQDMSDDDYDTESEEEREKDSKV.

A run of 2 helical transmembrane segments spans residues 41–61 (WVAG…FFGV) and 87–107 (WTGT…SYWG). The residue at position 111 (threonine 111) is a Phosphothreonine. The next 9 membrane-spanning stretches (helical) occupy residues 114 to 134 (IFQV…YMFL), 152 to 172 (MMEI…YGGY), 196 to 216 (IAFF…SNTI), 226 to 246 (WALG…LFLV), 355 to 375 (PIWL…SLFV), 390 to 410 (IPPA…IFLY), 435 to 455 (MGIG…VECY), 515 to 535 (LCMM…TMVV), and 559 to 579 (FYFL…ACAK). The interval 592 to 614 (MQDMSDDDYDTESEEEREKDSKV) is disordered. Residues 593-606 (QDMSDDDYDTESEE) are compositionally biased toward acidic residues.

The protein belongs to the major facilitator superfamily. Proton-dependent oligopeptide transporter (POT/PTR) (TC 2.A.17) family. In terms of tissue distribution, high expression in roots. Barely detected in shoots. Expressed in root pericycle cells close to the xylem.

It localises to the cell membrane. Low-affinity proton-dependent bidirectional nitrate transporter. Involved in nitrate loading into xylem and not in nitrate uptake. Not involved in histidine or dipeptides transport. This chain is Protein NRT1/ PTR FAMILY 7.3 (NPF7.3), found in Arabidopsis thaliana (Mouse-ear cress).